The sequence spans 162 residues: Small ribosomal subunit protein uS13 (162 aa).

The disordered stretch occupies residues 142-162 (RGQRTKSTGRRGSTVGVSRKK).

It belongs to the universal ribosomal protein uS13 family. Part of the 30S ribosomal subunit. Forms a loose heterodimer with protein S19. Forms two bridges to the 50S subunit in the 70S ribosome.

Located at the top of the head of the 30S subunit, it contacts several helices of the 16S rRNA. In the 70S ribosome it contacts the 23S rRNA (bridge B1a) and protein L5 of the 50S subunit (bridge B1b), connecting the 2 subunits; these bridges are implicated in subunit movement. This is Small ribosomal subunit protein uS13 from Methanosarcina mazei (strain ATCC BAA-159 / DSM 3647 / Goe1 / Go1 / JCM 11833 / OCM 88) (Methanosarcina frisia).